Reading from the N-terminus, the 96-residue chain is Nucleoid-associated protein CCA_00330 (96 aa).

The protein belongs to the YbaB/EbfC family. As to quaternary structure, homodimer.

The protein localises to the cytoplasm. It localises to the nucleoid. Its function is as follows. Binds to DNA and alters its conformation. May be involved in regulation of gene expression, nucleoid organization and DNA protection. The sequence is that of Nucleoid-associated protein CCA_00330 from Chlamydia caviae (strain ATCC VR-813 / DSM 19441 / 03DC25 / GPIC) (Chlamydophila caviae).